Here is a 73-residue protein sequence, read N- to C-terminus: Conotoxin reg3a (73 aa).

A signal peptide spans Met-1–Ala-20. A propeptide spanning residues Leu-21 to Arg-55 is cleaved from the precursor. 4 positions are modified to 4-hydroxyproline: Pro-59, Pro-60, Pro-65, and Pro-70. Cys-72 carries the post-translational modification Cysteine amide.

Post-translationally, contains 3 disulfide bonds. As to expression, expressed by the venom duct.

It localises to the secreted. This Conus regius (Crown cone) protein is Conotoxin reg3a.